We begin with the raw amino-acid sequence, 119 residues long: Acidic phospholipase A2 DE-III (119 aa).

Disulfide bonds link Cys-11–Cys-72, Cys-26–Cys-118, Cys-28–Cys-44, Cys-43–Cys-99, Cys-50–Cys-92, Cys-60–Cys-85, and Cys-79–Cys-90. The Ca(2+) site is built by Tyr-27, Gly-29, and Gly-31. Residue His-47 is part of the active site. Position 48 (Asp-48) interacts with Ca(2+). Asp-93 is an active-site residue.

Belongs to the phospholipase A2 family. Group I subfamily. D49 sub-subfamily. Ca(2+) is required as a cofactor. Expressed by the venom gland.

Its subcellular location is the secreted. The enzyme catalyses a 1,2-diacyl-sn-glycero-3-phosphocholine + H2O = a 1-acyl-sn-glycero-3-phosphocholine + a fatty acid + H(+). Functionally, PLA2 catalyzes the calcium-dependent hydrolysis of the 2-acyl groups in 3-sn-phosphoglycerides. This chain is Acidic phospholipase A2 DE-III, found in Naja melanoleuca (Forest cobra).